A 76-amino-acid chain; its full sequence is Large ribosomal subunit protein eL20 (76 aa).

The protein belongs to the eukaryotic ribosomal protein eL20 family. As to quaternary structure, part of the 50S ribosomal subunit. Binds 23S rRNA.

In Methanococcus maripaludis (strain C6 / ATCC BAA-1332), this protein is Large ribosomal subunit protein eL20.